Consider the following 156-residue polypeptide: Large ribosomal subunit protein uL22 (156 aa).

Belongs to the universal ribosomal protein uL22 family. Part of the 50S ribosomal subunit.

Functionally, this protein binds specifically to 23S rRNA. It makes multiple contacts with different domains of the 23S rRNA in the assembled 50S subunit and ribosome. The globular domain of the protein is located near the polypeptide exit tunnel on the outside of the subunit, while an extended beta-hairpin is found that lines the wall of the exit tunnel in the center of the 70S ribosome. The protein is Large ribosomal subunit protein uL22 of Methanocaldococcus jannaschii (strain ATCC 43067 / DSM 2661 / JAL-1 / JCM 10045 / NBRC 100440) (Methanococcus jannaschii).